Reading from the N-terminus, the 122-residue chain is Large ribosomal subunit protein uL14 (122 aa).

Belongs to the universal ribosomal protein uL14 family. Part of the 50S ribosomal subunit. Forms a cluster with proteins L3 and L19. In the 70S ribosome, L14 and L19 interact and together make contacts with the 16S rRNA in bridges B5 and B8.

Its function is as follows. Binds to 23S rRNA. Forms part of two intersubunit bridges in the 70S ribosome. The protein is Large ribosomal subunit protein uL14 of Marinobacter nauticus (strain ATCC 700491 / DSM 11845 / VT8) (Marinobacter aquaeolei).